The primary structure comprises 695 residues: MAETKIIYHMDEEETPYLVKLPVAPERVTLADFKNVLSNRPVHAYKFFFKSMDQDFGVVKEEIFDDNAKLPCFNGRVVSWLVLAEGAHSDAGSQGTDSHTDLPPPLERTGGIGDSRPPSFHPNVASSRDGMDNETGTESMVSHRRERARRRNREEAARTNGHPRGDRRRDVGLPPDSASTALSSELESSSFVDSDEDGSTSRLSSSTEQSTSSRLIRKHKRRRRKQRLRQADRASSFSSITDSTMSLNIVTVTLNMERHHFLGISIVGQSNDRGDGGIYIGSIMKGGAVAADGRIEPGDMLLQVNDVNFENMSNDDAVRVLREIVSQTGPISLTVAKCWDPTPRSYFTVPRADPVRPIDPAAWLSHTAALTGALPRYGTSPCSSAVTRTSSSSLTSSVPGAPQLEEAPLTVKSDMSAVVRVMQLPDSGLEIRDRMWLKITIANAVIGADVVDWLYTHVEGFKERREARKYASSLLKHGFLRHTVNKITFSEQCYYVFGDLCSNLATLNLNSGSSGTSDQDTLAPLPHPAAPWPLGQGYPYQYPGPPPCFPPAYQDPGFSYGSGSTGSQQSEGSKSSGSTRSSRRAPGREKERRAAGAGGSGSESDHTAPSGVGSSWRERPAGQLSRGSSPRSQASATAPGLPPPHPTTKAYTVVGGPPGGPPVRELAAVPPELTGSRQSFQKAMGNPCEFFVDIM.

One can recognise a DIX domain in the interval 1–85 (MAETKIIYHM…RVVSWLVLAE (85 aa)). The segment at 89 to 237 (SDAGSQGTDS…LRQADRASSF (149 aa)) is disordered. The segment covering 142 to 151 (SHRRERARRR) has biased composition (basic residues). Over residues 152–171 (NREEAARTNGHPRGDRRRDV) the composition is skewed to basic and acidic residues. The segment covering 176-192 (DSASTALSSELESSSFV) has biased composition (low complexity). Phosphoserine is present on Ser-194. Low complexity predominate over residues 200-214 (TSRLSSSTEQSTSSR). Residues 215-228 (LIRKHKRRRRKQRL) are compositionally biased toward basic residues. The PDZ domain maps to 251-323 (TVTLNMERHH…NDDAVRVLRE (73 aa)). The 75-residue stretch at 425 to 499 (PDSGLEIRDR…SEQCYYVFGD (75 aa)) folds into the DEP domain. The segment at 543–667 (PGPPPCFPPA…PGGPPVRELA (125 aa)) is disordered. Over residues 551–580 (PAYQDPGFSYGSGSTGSQQSEGSKSSGSTR) the composition is skewed to low complexity. The span at 625–636 (SRGSSPRSQASA) shows a compositional bias: polar residues.

It belongs to the DSH family. In terms of assembly, interacts with CXXC4. Interacts (via PDZ domain) with NXN. Interacts with BRD7 and INVS. Interacts (via PDZ domain) with VANGL1 and VANGL2 (via C-terminus). Interacts with ARRB1; the interaction is enhanced by phosphorylation of DVL1. Interacts with CYLD. Interacts (via PDZ domain) with RYK. Self-associates (via DIX domain) and forms higher homooligomers. Interacts (via PDZ domain) with DACT1 and FZD7, where DACT1 and FZD7 compete for the same binding site. Interacts (via DEP domain) with MUSK; the interaction is direct and mediates the formation a DVL1, MUSK and PAK1 ternary complex involved in AChR clustering. Interacts (via PDZ domain) with TMEM88. Interacts with DCDC2. Interacts with FOXK2. Interacts with PKD1 (via extracellular domain). Interacts (via PDZ domain) with CCDC88C/DAPLE; competes with CCDC88C for binding to frizzled receptor FZD7 and dissociates from CCDC88C following initiation of non-canonical Wnt signaling when CCDC88C displaces DVL1 from ligand-activated FZD7. Ubiquitinated; undergoes both 'Lys-48'-linked ubiquitination, leading to its subsequent degradation by the ubiquitin-proteasome pathway, and 'Lys-63'-linked ubiquitination. The interaction with INVS is required for ubiquitination. Deubiquitinated by CYLD, which acts on 'Lys-63'-linked ubiquitin chains.

It is found in the cell membrane. Its subcellular location is the cytoplasm. The protein resides in the cytosol. The protein localises to the cytoplasmic vesicle. Functionally, participates in Wnt signaling by binding to the cytoplasmic C-terminus of frizzled family members and transducing the Wnt signal to down-stream effectors. Plays a role both in canonical and non-canonical Wnt signaling. Plays a role in the signal transduction pathways mediated by multiple Wnt genes. Required for LEF1 activation upon WNT1 and WNT3A signaling. DVL1 and PAK1 form a ternary complex with MUSK which is important for MUSK-dependent regulation of AChR clustering during the formation of the neuromuscular junction (NMJ). The protein is Segment polarity protein dishevelled homolog DVL-1 (DVL1) of Homo sapiens (Human).